Reading from the N-terminus, the 149-residue chain is Protein FAM72C (149 aa).

The protein belongs to the FAM72 family.

The protein is Protein FAM72C (FAM72C) of Homo sapiens (Human).